Consider the following 391-residue polypeptide: Na(+)/H(+) antiporter NhaA 2 (391 aa).

The next 11 helical transmembrane spans lie at 25–45, 56–76, 98–118, 128–148, 157–177, 180–200, 208–228, 264–284, 297–317, 335–355, and 364–384; these read AGGI…NSPL, VWLG…IFFL, ALPG…YIAI, GWAI…SLLG, VFLA…IAFF, SGLN…LVAL, LLPY…SGVH, VAFA…LSGI, VALG…VLAI, GVAI…NLAF, and EVKV…IVLL.

This sequence belongs to the NhaA Na(+)/H(+) (TC 2.A.33) antiporter family.

The protein localises to the cell inner membrane. The enzyme catalyses Na(+)(in) + 2 H(+)(out) = Na(+)(out) + 2 H(+)(in). Na(+)/H(+) antiporter that extrudes sodium in exchange for external protons. The chain is Na(+)/H(+) antiporter NhaA 2 from Pseudomonas syringae pv. tomato (strain ATCC BAA-871 / DC3000).